Reading from the N-terminus, the 273-residue chain is Imidazole glycerol phosphate synthase subunit HisF (273 aa).

Residues Asp11 and Asp134 contribute to the active site.

Belongs to the HisA/HisF family. Heterodimer of HisH and HisF.

Its subcellular location is the cytoplasm. It catalyses the reaction 5-[(5-phospho-1-deoxy-D-ribulos-1-ylimino)methylamino]-1-(5-phospho-beta-D-ribosyl)imidazole-4-carboxamide + L-glutamine = D-erythro-1-(imidazol-4-yl)glycerol 3-phosphate + 5-amino-1-(5-phospho-beta-D-ribosyl)imidazole-4-carboxamide + L-glutamate + H(+). Its pathway is amino-acid biosynthesis; L-histidine biosynthesis; L-histidine from 5-phospho-alpha-D-ribose 1-diphosphate: step 5/9. Its function is as follows. IGPS catalyzes the conversion of PRFAR and glutamine to IGP, AICAR and glutamate. The HisF subunit catalyzes the cyclization activity that produces IGP and AICAR from PRFAR using the ammonia provided by the HisH subunit. This is Imidazole glycerol phosphate synthase subunit HisF from Methanosarcina mazei (strain ATCC BAA-159 / DSM 3647 / Goe1 / Go1 / JCM 11833 / OCM 88) (Methanosarcina frisia).